A 347-amino-acid polypeptide reads, in one-letter code: Two pore potassium channel a (347 aa).

Residues 1-11 are compositionally biased toward polar residues; it reads MDDNSIQQSLL. Residues 1–49 are disordered; it reads MDDNSIQQSLLADNPNVLQRKPSEGVNRFRRCRSTPSTDPLQGPPEKGS. The Cytoplasmic segment spans residues 1–65; it reads MDDNSIQQSL…LFKEMRPSFR (65 aa). Residues 66–86 traverse the membrane as a helical segment; the sequence is LVGLLLFIYLLVGVLAFYAVM. Positions 99-118 form an intramembrane region, pore-forming; it reads DALYFCVVTMTTVGYGDLVP. Residues 125–145 traverse the membrane as a helical segment; that stretch reads LLACAFVFMGMAVVALFVSKV. The Cytoplasmic segment spans residues 146–183; it reads ADYLVEKQEVLFFKALHTNLKGGETKMLRAIETNRIKY. A helical membrane pass occupies residues 184-204; it reads KFYTNALLLVLSIISGTVFLW. The segment at residues 213 to 232 is an intramembrane region (pore-forming); it reads DSFYCVCATITTLGYGDKSF. A helical membrane pass occupies residues 239–259; sequence VFAVFWIITSTIIMAQFFMYL. The Cytoplasmic portion of the chain corresponds to 260 to 347; the sequence is AEIYTERRQK…YDLTLAQSAQ (88 aa). 2 EF-hand domains span residues 276–311 and 315–347; these read LTRK…ELGK and EEIS…QSAQ. Residues Asp289, Asp291, Asp293, Gln295, Glu300, Asp328, Asp330, Ser332, Thr334, and Asp339 each coordinate Ca(2+).

The protein belongs to the two pore domain potassium channel (TC 1.A.1.7) family. In terms of assembly, homodimer.

The protein resides in the vacuole membrane. Its function is as follows. Highly selective inward-rectifying potassium channel that is specifically located in the tonoplast of large vacuoles. Functions independently of the voltage difference across the membrane. This is Two pore potassium channel a (TPKA) from Oryza sativa subsp. japonica (Rice).